A 559-amino-acid polypeptide reads, in one-letter code: Coiled-coil domain-containing protein 78 (559 aa).

A compositionally biased stretch (basic and acidic residues) spans 1-19; it reads MDSTEDRETPLKDQIRRLT. The tract at residues 1–20 is disordered; that stretch reads MDSTEDRETPLKDQIRRLTN. Coiled coils occupy residues 9–327 and 419–541; these read TPLK…ADYV and QSQV…AVSA.

The protein belongs to the CCDC78 family. As to expression, restricted to multiciliated cells.

It localises to the cytoplasm. Its subcellular location is the cytoskeleton. It is found in the microtubule organizing center. The protein resides in the centrosome. The protein localises to the centriole. Functionally, component of the deuterosome, a structure that promotes de novo centriole amplification in multiciliated cells that can generate more than 100 centrioles. Deuterosome-mediated centriole amplification occurs in terminally differentiated multiciliated cells (G1/0) and not in S phase. Essential for centriole amplification and is required for cep152 localization to the deuterosome. The sequence is that of Coiled-coil domain-containing protein 78 (ccdc78) from Xenopus laevis (African clawed frog).